A 68-amino-acid chain; its full sequence is Putative transcript Y 10 protein (68 aa).

This is Putative transcript Y 10 protein (TTTY10) from Homo sapiens (Human).